Here is a 370-residue protein sequence, read N- to C-terminus: Cyclic dehypoxanthine futalosine synthase (370 aa).

Residues 50 to 295 (TTFVIGRNVN…QSSWVTMGPE (246 aa)) enclose the Radical SAM core domain. [4Fe-4S] cluster contacts are provided by C64, C68, and C71.

The protein belongs to the radical SAM superfamily. MqnC family. [4Fe-4S] cluster is required as a cofactor.

It carries out the reaction dehypoxanthine futalosine + S-adenosyl-L-methionine = cyclic dehypoxanthinylfutalosinate + 5'-deoxyadenosine + L-methionine + H(+). The protein operates within quinol/quinone metabolism; menaquinone biosynthesis. Functionally, radical SAM enzyme that catalyzes the cyclization of dehypoxanthine futalosine (DHFL) into cyclic dehypoxanthine futalosine (CDHFL), a step in the biosynthesis of menaquinone (MK, vitamin K2). In Halalkalibacterium halodurans (strain ATCC BAA-125 / DSM 18197 / FERM 7344 / JCM 9153 / C-125) (Bacillus halodurans), this protein is Cyclic dehypoxanthine futalosine synthase.